An 88-amino-acid polypeptide reads, in one-letter code: Small ribosomal subunit protein uS15c (88 aa).

This sequence belongs to the universal ribosomal protein uS15 family. Part of the 30S ribosomal subunit.

It localises to the plastid. The protein localises to the chloroplast. The sequence is that of Small ribosomal subunit protein uS15c (rps15) from Physcomitrium patens (Spreading-leaved earth moss).